We begin with the raw amino-acid sequence, 141 residues long: Nucleoside diphosphate kinase (141 aa).

6 residues coordinate ATP: K9, F57, R85, T91, R102, and N112. H115 acts as the Pros-phosphohistidine intermediate in catalysis.

The protein belongs to the NDK family. As to quaternary structure, homotetramer. It depends on Mg(2+) as a cofactor.

It is found in the cytoplasm. It carries out the reaction a 2'-deoxyribonucleoside 5'-diphosphate + ATP = a 2'-deoxyribonucleoside 5'-triphosphate + ADP. It catalyses the reaction a ribonucleoside 5'-diphosphate + ATP = a ribonucleoside 5'-triphosphate + ADP. Its function is as follows. Major role in the synthesis of nucleoside triphosphates other than ATP. The ATP gamma phosphate is transferred to the NDP beta phosphate via a ping-pong mechanism, using a phosphorylated active-site intermediate. This is Nucleoside diphosphate kinase from Chlamydia trachomatis serovar D (strain ATCC VR-885 / DSM 19411 / UW-3/Cx).